Here is a 333-residue protein sequence, read N- to C-terminus: Tetraacyldisaccharide 4'-kinase (333 aa).

55 to 62 is an ATP binding site; sequence TAGGNGKT.

Belongs to the LpxK family.

The enzyme catalyses a lipid A disaccharide + ATP = a lipid IVA + ADP + H(+). It functions in the pathway glycolipid biosynthesis; lipid IV(A) biosynthesis; lipid IV(A) from (3R)-3-hydroxytetradecanoyl-[acyl-carrier-protein] and UDP-N-acetyl-alpha-D-glucosamine: step 6/6. Transfers the gamma-phosphate of ATP to the 4'-position of a tetraacyldisaccharide 1-phosphate intermediate (termed DS-1-P) to form tetraacyldisaccharide 1,4'-bis-phosphate (lipid IVA). This is Tetraacyldisaccharide 4'-kinase from Proteus mirabilis (strain HI4320).